A 699-amino-acid chain; its full sequence is Transketolase (699 aa).

His-45 contributes to the substrate binding site. Thiamine diphosphate is bound by residues Thr-48, His-85, and 133–135; that span reads GPL. Residue Asp-177 coordinates Mg(2+). Thiamine diphosphate is bound by residues Gly-178 and Asn-207. The Mg(2+) site is built by Asn-207 and Ile-209. Substrate-binding residues include His-283, Arg-378, and Ser-405. His-283 provides a ligand contact to thiamine diphosphate. Residue Glu-441 is the Proton donor of the active site. Phe-467 provides a ligand contact to thiamine diphosphate. Substrate-binding residues include His-491, Asp-499, and Arg-552.

It belongs to the transketolase family. Homodimer. Requires Mg(2+) as cofactor. Ca(2+) serves as cofactor. It depends on Mn(2+) as a cofactor. Co(2+) is required as a cofactor. The cofactor is thiamine diphosphate.

It catalyses the reaction D-sedoheptulose 7-phosphate + D-glyceraldehyde 3-phosphate = aldehydo-D-ribose 5-phosphate + D-xylulose 5-phosphate. Catalyzes the transfer of a two-carbon ketol group from a ketose donor to an aldose acceptor, via a covalent intermediate with the cofactor thiamine pyrophosphate. This is Transketolase (tkt) from Mycobacterium leprae (strain TN).